The following is a 463-amino-acid chain: Cysteine--tRNA ligase (463 aa).

Cys29 contributes to the Zn(2+) binding site. The 'HIGH' region motif lies at 31-41 (ATPQTQPHIGH). 3 residues coordinate Zn(2+): Cys212, His237, and Glu241. The 'KMSKS' region signature appears at 268–272 (KMSKS). An ATP-binding site is contributed by Lys271.

This sequence belongs to the class-I aminoacyl-tRNA synthetase family. As to quaternary structure, monomer. Zn(2+) serves as cofactor.

Its subcellular location is the cytoplasm. It carries out the reaction tRNA(Cys) + L-cysteine + ATP = L-cysteinyl-tRNA(Cys) + AMP + diphosphate. The protein is Cysteine--tRNA ligase of Corynebacterium diphtheriae (strain ATCC 700971 / NCTC 13129 / Biotype gravis).